The chain runs to 117 residues: Non-specific lipid-transfer protein 2 (117 aa).

Positions Met-1–Ala-25 are cleaved as a signal peptide. Cystine bridges form between Cys-29/Cys-76, Cys-39/Cys-53, Cys-54/Cys-99, and Cys-74/Cys-113.

This sequence belongs to the plant LTP family.

Plant non-specific lipid-transfer proteins transfer phospholipids as well as galactolipids across membranes. May play a role in wax or cutin deposition in the cell walls of expanding epidermal cells and certain secretory tissues. The sequence is that of Non-specific lipid-transfer protein 2 (LTP2) from Brassica napus (Rape).